The following is a 428-amino-acid chain: Dihydroorotase (428 aa).

The Zn(2+) site is built by His-60 and His-62. Substrate-binding positions include His-62–Arg-64 and Asn-94. Positions 152, 179, and 232 each coordinate Zn(2+). A substrate-binding site is contributed by Asn-278. Asp-305 is a Zn(2+) binding site. Residue Asp-305 is part of the active site. His-309 is a binding site for substrate.

Belongs to the metallo-dependent hydrolases superfamily. DHOase family. Class I DHOase subfamily. Zn(2+) serves as cofactor.

It carries out the reaction (S)-dihydroorotate + H2O = N-carbamoyl-L-aspartate + H(+). It functions in the pathway pyrimidine metabolism; UMP biosynthesis via de novo pathway; (S)-dihydroorotate from bicarbonate: step 3/3. In terms of biological role, catalyzes the reversible cyclization of carbamoyl aspartate to dihydroorotate. This Ruminiclostridium cellulolyticum (strain ATCC 35319 / DSM 5812 / JCM 6584 / H10) (Clostridium cellulolyticum) protein is Dihydroorotase.